The chain runs to 376 residues: UDP-N-acetylglucosamine 2-epimerase (376 aa).

Residues Arg-10, Lys-15, Asp-95, Glu-117, His-213, Gln-271, Phe-276, 290 to 292 (SGG), Glu-296, and Arg-313 contribute to the substrate site.

It belongs to the UDP-N-acetylglucosamine 2-epimerase family. As to quaternary structure, homodimer.

The protein localises to the cytoplasm. The enzyme catalyses UDP-N-acetyl-alpha-D-glucosamine = UDP-N-acetyl-alpha-D-mannosamine. It participates in bacterial outer membrane biogenesis; enterobacterial common antigen biosynthesis. Allosterically activated by its substrate, UDP-GlcNAc. In terms of biological role, catalyzes the reversible epimerization at C-2 of UDP-N-acetylglucosamine (UDP-GlcNAc) and thereby provides bacteria with UDP-N-acetylmannosamine (UDP-ManNAc), the activated donor of ManNAc residues. Also involved in bacteriophage N4 adsorption. The chain is UDP-N-acetylglucosamine 2-epimerase from Escherichia coli (strain K12).